The sequence spans 200 residues: Max dimerization protein 3 (200 aa).

Disordered stretches follow at residues 26–56 (EHGY…DNVR) and 134–164 (LLPP…QEDL). The bHLH domain maps to 54-106 (NVRSVHNELEKHRRAQLRRCLEQLKQQVPLSMENSRHTTLSLLHRAKQHIKKL).

In terms of assembly, efficient DNA binding requires dimerization with another bHLH protein. Binds DNA as a heterodimer with MAX.

The protein localises to the nucleus. In terms of biological role, transcriptional repressor. Binds with MAX to form a sequence-specific DNA-binding protein complex which recognizes the core sequence 5'-CAC[GA]TG-3'. The polypeptide is Max dimerization protein 3 (mxd3) (Xenopus tropicalis (Western clawed frog)).